Consider the following 623-residue polypeptide: Membrane protein insertase YidC (623 aa).

5 helical membrane-spanning segments follow: residues 8–28 (LILA…LFPP), 379–399 (MGLA…PLAY), 449–469 (LPIL…FVTI), 507–527 (TTMA…SMWL), and 543–563 (IFAW…SGLV). The span at 601 to 617 (KPAAQPAGKAANDGAAP) shows a compositional bias: low complexity. The tract at residues 601 to 623 (KPAAQPAGKAANDGAAPAKKRKP) is disordered.

This sequence belongs to the OXA1/ALB3/YidC family. Type 1 subfamily. As to quaternary structure, interacts with the Sec translocase complex via SecD. Specifically interacts with transmembrane segments of nascent integral membrane proteins during membrane integration.

It is found in the cell inner membrane. Its function is as follows. Required for the insertion and/or proper folding and/or complex formation of integral membrane proteins into the membrane. Involved in integration of membrane proteins that insert both dependently and independently of the Sec translocase complex, as well as at least some lipoproteins. Aids folding of multispanning membrane proteins. This chain is Membrane protein insertase YidC, found in Cereibacter sphaeroides (strain ATCC 17023 / DSM 158 / JCM 6121 / CCUG 31486 / LMG 2827 / NBRC 12203 / NCIMB 8253 / ATH 2.4.1.) (Rhodobacter sphaeroides).